The primary structure comprises 179 residues: Translation initiation factor IF-3 (179 aa).

Belongs to the IF-3 family. In terms of assembly, monomer.

The protein localises to the cytoplasm. Its function is as follows. IF-3 binds to the 30S ribosomal subunit and shifts the equilibrium between 70S ribosomes and their 50S and 30S subunits in favor of the free subunits, thus enhancing the availability of 30S subunits on which protein synthesis initiation begins. The chain is Translation initiation factor IF-3 from Buchnera aphidicola subsp. Acyrthosiphon pisum (strain 5A).